Here is a 162-residue protein sequence, read N- to C-terminus: Catabolic 3-dehydroquinase (162 aa).

Y24 serves as the catalytic Proton acceptor. Substrate-binding residues include N88, H94, and D101. H114 functions as the Proton donor in the catalytic mechanism. Substrate-binding positions include V115–S116 and R125.

Belongs to the type-II 3-dehydroquinase family. As to quaternary structure, homododecamer. Adopts a ring-like structure, composed of an arrangement of two hexameric rings stacked on top of one another.

It catalyses the reaction 3-dehydroquinate = 3-dehydroshikimate + H2O. Its pathway is aromatic compound metabolism; 3,4-dihydroxybenzoate biosynthesis; 3,4-dihydroxybenzoate from 3-dehydroquinate: step 1/2. Its function is as follows. Is involved in the catabolism of quinate. Allows the utilization of quinate as carbon source via the beta-ketoadipate pathway. This Podospora anserina (strain S / ATCC MYA-4624 / DSM 980 / FGSC 10383) (Pleurage anserina) protein is Catabolic 3-dehydroquinase.